The primary structure comprises 1375 residues: DNA-directed RNA polymerase subunit beta (1375 aa).

It belongs to the RNA polymerase beta chain family. The RNAP catalytic core consists of 2 alpha, 1 beta, 1 beta' and 1 omega subunit. When a sigma factor is associated with the core the holoenzyme is formed, which can initiate transcription.

The enzyme catalyses RNA(n) + a ribonucleoside 5'-triphosphate = RNA(n+1) + diphosphate. Functionally, DNA-dependent RNA polymerase catalyzes the transcription of DNA into RNA using the four ribonucleoside triphosphates as substrates. This is DNA-directed RNA polymerase subunit beta from Methylorubrum populi (strain ATCC BAA-705 / NCIMB 13946 / BJ001) (Methylobacterium populi).